The following is a 284-amino-acid chain: MRYTGLMGILLTLVNLLQLAATLRIAAFNIRTFGDTKMSNATLSSYIVKILSRYDIAVVQEVRDTHLVAVGKLLDELNRDIPDNYRYIISEPLGRKSYKEQYLFVYRPSQVSVLDSYHYDDGCEPCGNDTFSREPAIVKFFSPYTEVREFAIVPLHSAPTEAVSEIDALYDVYLDVRQKWGLEDIMFMGDFNAGCSYVTSSQWSSIRLRTSPIFQWLIPDSADTTATSTHCAYDRIVVAGALLQAAVVPSSAVPFDFQAEYRLTNQMAEAISDHYPVEVTLRKT.

Residues 1–22 form the signal peptide; that stretch reads MRYTGLMGILLTLVNLLQLAAT. N-linked (GlcNAc...) asparagine glycosylation is present at N40. The active site involves E100. C123 and C126 are joined by a disulfide. An N-linked (GlcNAc...) asparagine glycan is attached at N128. Residue H156 is part of the active site. The cysteines at positions 195 and 231 are disulfide-linked.

Belongs to the DNase I family. Ca(2+) serves as cofactor. The cofactor is Mg(2+).

The protein localises to the secreted. It localises to the zymogen granule. Its subcellular location is the nucleus envelope. The catalysed reaction is Endonucleolytic cleavage to 5'-phosphodinucleotide and 5'-phosphooligonucleotide end-products.. In terms of biological role, serum endocuclease secreted into body fluids by a wide variety of exocrine and endocrine organs. Expressed by non-hematopoietic tissues and preferentially cleaves protein-free DNA. Among other functions, seems to be involved in cell death by apoptosis. Binds specifically to G-actin and blocks actin polymerization. Together with DNASE1L3, plays a key role in degrading neutrophil extracellular traps (NETs). NETs are mainly composed of DNA fibers and are released by neutrophils to bind pathogens during inflammation. Degradation of intravascular NETs by DNASE1 and DNASE1L3 is required to prevent formation of clots that obstruct blood vessels and cause organ damage following inflammation. This Rattus norvegicus (Rat) protein is Deoxyribonuclease-1 (Dnase1).